The following is a 317-amino-acid chain: Nucleosome assembly protein 1;4 (317 aa).

The Nuclear export signal motif lies at 52-67; the sequence is LSPKVTKRVLFLKDIQ. The Nuclear localization signal motif lies at 214–219; it reads KKKTKK. The interval 297–317 is disordered; sequence ALVDEDDSDDNDDDDNDEKSD. Positions 298–317 are enriched in acidic residues; it reads LVDEDDSDDNDDDDNDEKSD.

The protein belongs to the nucleosome assembly protein (NAP) family. Can form homomeric and heteromeric protein complexes with NAP1;1, NAP1;2 and NAP1;3. Binds histone H2A. Expressed in the root segment covering the apical end of the differentiation zone, the elongation zone of the root and the mature pollen within the anthers of open flowers.

Its subcellular location is the nucleus. It localises to the cytoplasm. Its function is as follows. May modulate chromatin structure by regulation of nucleosome assembly/disassembly. This Arabidopsis thaliana (Mouse-ear cress) protein is Nucleosome assembly protein 1;4 (NAP1;4).